The primary structure comprises 525 residues: ESX-1 secretion-associated protein EspE (525 aa).

2 disordered regions span residues 244 to 341 and 375 to 494; these read AVAG…PGAA and ALQA…APVH. Over residues 248 to 258 the composition is skewed to acidic residues; that stretch reads DADDTTADDTA. Over residues 274-286 the composition is skewed to basic and acidic residues; it reads ETSKEDGQSRHEN. Gly residues predominate over residues 292 to 306; sequence SGGGGGATSGGGGGA. Composition is skewed to low complexity over residues 307 to 319, 332 to 341, and 375 to 397; these read PSSA…AGTP, TPTDAQPGAA, and ALQA…AAAP. Residues 411-440 show a composition bias toward basic and acidic residues; that stretch reads DPDAEGDKDSDKRDGEGKEDGTAPRDREST.

It localises to the cytoplasm. In Mycolicibacterium smegmatis (strain ATCC 700084 / mc(2)155) (Mycobacterium smegmatis), this protein is ESX-1 secretion-associated protein EspE.